The chain runs to 874 residues: Probable inorganic carbon transporter subunit DabA (874 aa).

Cys398, Asp400, His580, and Cys595 together coordinate Zn(2+).

Belongs to the inorganic carbon transporter (TC 9.A.2) DabA family. Forms a complex with DabB. The cofactor is Zn(2+).

Its subcellular location is the cell membrane. Its function is as follows. Part of an energy-coupled inorganic carbon pump. In Bacillus cereus (strain AH187), this protein is Probable inorganic carbon transporter subunit DabA.